A 193-amino-acid chain; its full sequence is Putative manganese efflux pump MntP (193 aa).

Transmembrane regions (helical) follow at residues 6 to 26 (LLGLAVALAMDAFAVAIAVGI), 41 to 61 (YHFGLFQALMPIIGWALGTGI), 65 to 85 (TQSYAHWIAFTLLALVGANMI), 107 to 127 (LIILSLATSIDALAVGLSLSM), 132 to 152 (IWYPALIIGLVAGAFTLFGML), and 169 to 189 (VLGGIILWAIGLNILYDNGVF).

It belongs to the MntP (TC 9.B.29) family.

Its subcellular location is the cell inner membrane. Probably functions as a manganese efflux pump. This chain is Putative manganese efflux pump MntP, found in Desulfotalea psychrophila (strain LSv54 / DSM 12343).